Here is a 349-residue protein sequence, read N- to C-terminus: Adenine deaminase (349 aa).

Residues His24, His26, and His204 each contribute to the Zn(2+) site. The active-site Proton donor is Glu207. Residue Asp285 coordinates Zn(2+). Residue Asp286 coordinates substrate.

This sequence belongs to the metallo-dependent hydrolases superfamily. Adenosine and AMP deaminases family. Adenine deaminase type 2 subfamily. Requires Zn(2+) as cofactor.

It catalyses the reaction adenine + H2O + H(+) = hypoxanthine + NH4(+). Catalyzes the hydrolytic deamination of adenine to hypoxanthine. Plays an important role in the purine salvage pathway and in nitrogen catabolism. This is Adenine deaminase from Trichlorobacter lovleyi (strain ATCC BAA-1151 / DSM 17278 / SZ) (Geobacter lovleyi).